The sequence spans 143 residues: NADH-quinone oxidoreductase subunit A (143 aa).

3 helical membrane passes run 8–28, 63–83, and 93–113; these read FGNV…GYLT, FYVV…LFPW, and FALI…VYAW.

This sequence belongs to the complex I subunit 3 family. NDH-1 is composed of 14 different subunits. Subunits NuoA, H, J, K, L, M, N constitute the membrane sector of the complex.

The protein resides in the cell inner membrane. It carries out the reaction a quinone + NADH + 5 H(+)(in) = a quinol + NAD(+) + 4 H(+)(out). In terms of biological role, NDH-1 shuttles electrons from NADH, via FMN and iron-sulfur (Fe-S) centers, to quinones in the respiratory chain. The immediate electron acceptor for the enzyme in this species is believed to be a menaquinone. Couples the redox reaction to proton translocation (for every two electrons transferred, four hydrogen ions are translocated across the cytoplasmic membrane), and thus conserves the redox energy in a proton gradient. The sequence is that of NADH-quinone oxidoreductase subunit A from Chlorobium luteolum (strain DSM 273 / BCRC 81028 / 2530) (Pelodictyon luteolum).